The chain runs to 653 residues: Fructose-1,6-bisphosphatase class 3 (653 aa).

This sequence belongs to the FBPase class 3 family. Mn(2+) serves as cofactor.

The catalysed reaction is beta-D-fructose 1,6-bisphosphate + H2O = beta-D-fructose 6-phosphate + phosphate. Its pathway is carbohydrate biosynthesis; gluconeogenesis. This Listeria innocua serovar 6a (strain ATCC BAA-680 / CLIP 11262) protein is Fructose-1,6-bisphosphatase class 3.